Consider the following 189-residue polypeptide: Apolipoprotein D (189 aa).

The first 20 residues, 1 to 20 (MGMMLLLLSMLAGLVAEAEG), serve as a signal peptide directing secretion. Position 21 is a pyrrolidone carboxylic acid (glutamine 21). Disulfide bonds link cysteine 28–cysteine 134 and cysteine 61–cysteine 185. N-linked (GlcNAc...) asparagine glycans are attached at residues asparagine 65 and asparagine 98.

Belongs to the calycin superfamily. Lipocalin family. Homodimer.

It is found in the secreted. In terms of biological role, APOD occurs in the macromolecular complex with lecithin-transport and binding of bilin. Appears to be able to transport a variety of ligands in a number of different contexts. This chain is Apolipoprotein D (APOD), found in Cavia porcellus (Guinea pig).